A 337-amino-acid chain; its full sequence is Glucokinase (337 aa).

Residue 11–16 (ADIGGT) coordinates ATP.

This sequence belongs to the bacterial glucokinase family.

Its subcellular location is the cytoplasm. It carries out the reaction D-glucose + ATP = D-glucose 6-phosphate + ADP + H(+). This Xylella fastidiosa (strain 9a5c) protein is Glucokinase.